The sequence spans 322 residues: Tyrosine recombinase XerC (322 aa).

The 91-residue stretch at Pro14 to Asp104 folds into the Core-binding (CB) domain. The Tyr recombinase domain occupies Arg125–Asp311. Residues Arg170, Lys195, His263, Arg266, and His289 contribute to the active site. Tyr298 (O-(3'-phospho-DNA)-tyrosine intermediate) is an active-site residue.

The protein belongs to the 'phage' integrase family. XerC subfamily. As to quaternary structure, forms a cyclic heterotetrameric complex composed of two molecules of XerC and two molecules of XerD.

It localises to the cytoplasm. In terms of biological role, site-specific tyrosine recombinase, which acts by catalyzing the cutting and rejoining of the recombining DNA molecules. The XerC-XerD complex is essential to convert dimers of the bacterial chromosome into monomers to permit their segregation at cell division. It also contributes to the segregational stability of plasmids. The chain is Tyrosine recombinase XerC from Methylobacterium nodulans (strain LMG 21967 / CNCM I-2342 / ORS 2060).